A 358-amino-acid polypeptide reads, in one-letter code: Photosystem II protein D1 (358 aa).

Helical transmembrane passes span 29–46 (YVGW…AATI), 116–131 (HFLI…QWEL), and 140–154 (WICV…AATS). Histidine 116 contacts chlorophyll a. Tryptophan 124 lines the pheophytin a pocket. Positions 168 and 187 each coordinate [CaMn4O5] cluster. Residues 195–216 (FHQLGVAGVFGGSLFCAMHGSL) traverse the membrane as a helical segment. Histidine 196 provides a ligand contact to chlorophyll a. A quinone is bound by residues histidine 213 and 262–263 (SF). Histidine 213 contacts Fe cation. Residue histidine 270 coordinates Fe cation. The helical transmembrane segment at 272–286 (FLAAWPVVCIWFTAL) threads the bilayer. Residues histidine 330, glutamate 331, aspartate 340, and alanine 342 each contribute to the [CaMn4O5] cluster site. A propeptide spanning residues 343-358 (AGEVLPIALQSPAING) is cleaved from the precursor.

It belongs to the reaction center PufL/M/PsbA/D family. In terms of assembly, PSII is composed of 1 copy each of membrane proteins PsbA, PsbB, PsbC, PsbD, PsbE, PsbF, PsbH, PsbI, PsbJ, PsbK, PsbL, PsbM, PsbT, PsbX, PsbY, PsbZ, Psb30/Ycf12, peripheral proteins PsbO, CyanoQ (PsbQ), PsbU, PsbV and a large number of cofactors. It forms dimeric complexes. Requires The D1/D2 heterodimer binds P680, chlorophylls that are the primary electron donor of PSII, and subsequent electron acceptors. It shares a non-heme iron and each subunit binds pheophytin, quinone, additional chlorophylls, carotenoids and lipids. D1 provides most of the ligands for the Mn4-Ca-O5 cluster of the oxygen-evolving complex (OEC). There is also a Cl(-1) ion associated with D1 and D2, which is required for oxygen evolution. The PSII complex binds additional chlorophylls, carotenoids and specific lipids. as cofactor. Post-translationally, tyr-159 forms a radical intermediate that is referred to as redox-active TyrZ, YZ or Y-Z. In terms of processing, C-terminally processed by CtpA; processing is essential to allow assembly of the oxygen-evolving complex and thus photosynthetic growth.

It is found in the cellular thylakoid membrane. It catalyses the reaction 2 a plastoquinone + 4 hnu + 2 H2O = 2 a plastoquinol + O2. Photosystem II (PSII) is a light-driven water:plastoquinone oxidoreductase that uses light energy to abstract electrons from H(2)O, generating O(2) and a proton gradient subsequently used for ATP formation. It consists of a core antenna complex that captures photons, and an electron transfer chain that converts photonic excitation into a charge separation. The D1/D2 (PsbA/PsbD) reaction center heterodimer binds P680, the primary electron donor of PSII as well as several subsequent electron acceptors. The sequence is that of Photosystem II protein D1 from Mastigocladus laminosus (Fischerella sp.).